A 426-amino-acid polypeptide reads, in one-letter code: Trophoblast glycoprotein (426 aa).

The N-terminal stretch at 1–31 (MPGAGSRGPSAGDGRLRLARLALVLLGWVSA) is a signal peptide. Topologically, residues 32 to 361 (SAPSSSLPSS…ATLPQSLQTS (330 aa)) are extracellular. A compositionally biased stretch (low complexity) spans 34–51 (PSSSLPSSSTSPAAFLAS). The disordered stretch occupies residues 34–54 (PSSSLPSSSTSPAAFLASGSA). The LRRNT domain maps to 53–91 (SAQPPPAERCPAACECSEAARTVKCVNRNLLEVPADLPP). Disulfide bonds link C62/C68 and C66/C77. LRR repeat units follow at residues 92 to 113 (YVRN…AFAR), 116 to 139 (PLAD…GAFE), and 141 to 163 (LPGL…FTFA). An N-linked (GlcNAc...) asparagine glycan is attached at N124. N-linked (GlcNAc...) asparagine glycosylation occurs at N166. LRR repeat units lie at residues 172–210 (PSPL…AALR), 215–238 (LRGL…LLDQ), 239–261 (LPSL…ASFR), and 262–281 (NLTH…VLHN). A glycan (N-linked (GlcNAc...) asparagine) is linked at N281. One can recognise an LRRCT domain in the interval 289–352 (GLAHVRVFLD…LTSSDLDCDA (64 aa)). Cystine bridges form between C304–C329 and C306–C350. The helical transmembrane segment at 362 to 382 (YVFLGIVLALIGAIFLLVLYL) threads the bilayer. Topologically, residues 383–426 (NRKGIKKWMHNIRDACRDHMEGYHYRYEINADPRLTNLSSNSDV) are cytoplasmic. At S424 the chain carries Phosphoserine.

Highly glycosylated.

The protein resides in the cell membrane. May function as an inhibitor of Wnt/beta-catenin signaling by indirectly interacting with LRP6 and blocking Wnt3a-dependent LRP6 internalization. The protein is Trophoblast glycoprotein (Tpbg) of Rattus norvegicus (Rat).